The chain runs to 343 residues: MAGGRPHLKRSFSIIPCFVFVESVLLGIVVLLAYRLEFTDTFPVHTQGFFCYDSAYAKPYPGPEAASRAPPALIYALVTAGPTLTILLGELARAFFPAPPSSSPVSGESTIVSGACCRFSPPLRRLVRFLGVYSFGLFTTTIFANAGQVVTGNPTPHFLSVCRPNYTALGCPPPSPDRPGPDRFVTDQSACAGSPSLVAAARRAFPCKDAALCAYAVTYTAMYVTLVFRVKGSRLVKPSLCLALLCPAFLVGVVRVAEYRNHWSDVLAGFLTGAAIATFLVTCVVHNFQSRPHSGRRLSPWEDLSQAPTMDSPLEKNPRPAGRIRHRHGSPHPSRRTVPAVAT.

3 consecutive transmembrane segments (helical) span residues 12–32 (FSII…VVLL), 72–92 (ALIY…GELA), and 129–149 (FLGV…AGQV). Asn165 carries N-linked (GlcNAc...) asparagine glycosylation. 3 helical membrane-spanning segments follow: residues 210-230 (AALC…VFRV), 239-259 (SLCL…VAEY), and 266-286 (VLAG…CVVH). The interval 291 to 343 (RPHSGRRLSPWEDLSQAPTMDSPLEKNPRPAGRIRHRHGSPHPSRRTVPAVAT) is disordered. Phosphoserine occurs at positions 299 and 312. A compositionally biased stretch (basic residues) spans 322–335 (GRIRHRHGSPHPSR).

Belongs to the PA-phosphatase related phosphoesterase family.

It localises to the membrane. The chain is Phospholipid phosphatase-related protein type 2 from Mus musculus (Mouse).